Consider the following 532-residue polypeptide: Sodium-dependent lysophosphatidylcholine symporter 1-A (532 aa).

At 1-40 (MARGEGAEQFSSGLLPTAKSVTQNEIKMVKLPKQQERKRA) the chain is on the cytoplasmic side. Residues 41-70 (LTVWSKVCFAIGGAPYQITGTALGFFLQIF) form a helical membrane-spanning segment. Residues 71-81 (LLDVAQLNPLN) are Extracellular-facing. The helical transmembrane segment at 82-102 (ASVILFVGRAWDAVTDPTVGF) threads the bilayer. The Cytoplasmic portion of the chain corresponds to 103-114 (LVSRTPWTRHGR). Residues 115–134 (MMPWILVSTIPAVLCYFLIW) traverse the membrane as a helical segment. Residues 135–144 (VVPPIEQGKM) are Extracellular-facing. A helical transmembrane segment spans residues 145–169 (MWYLLFYCLFQTLQTCFHVPYSALT). The Cytoplasmic segment spans residues 170 to 176 (MFISTEQ). Residues 177 to 208 (RERDSATAYRMTVEVFGTVVGTAIQGQIVGMA) traverse the membrane as a helical segment. At 209–232 (NTPCKNNTSPNNSSNDLIQSNNSH) the chain is on the extracellular side. Cys-212 and Cys-464 are oxidised to a cystine. Residues Asn-214, Asn-220, and Asn-229 are each glycosylated (N-linked (GlcNAc...) asparagine). Residues 233–266 (IPLKSNIFDERCAYMIASAVISLIYVVCAAVLFF) form a helical membrane-spanning segment. The Cytoplasmic segment spans residues 267-297 (GVREQDVQGELKAQKRVSFQKGLRLVMGHGP). A helical transmembrane segment spans residues 298–324 (YVKLVLAFLFTSLAFMLLEGNFAVFIK). Over 325–335 (YTLGFREDFQN) the chain is Extracellular. Residues 336–354 (ILLVIMVSATVSIPMWQWF) form a helical membrane-spanning segment. Over 355–358 (LCRF) the chain is Cytoplasmic. The chain crosses the membrane as a helical span at residues 359 to 380 (GKKTAVYIGITWAVPFMILVVS). Over 381–383 (VNS) the chain is Extracellular. A helical membrane pass occupies residues 384 to 420 (SLIVSYIVSIAAGVSVGAAFLLPWSMLPDVVDDFKLQ). Residues 421-430 (NPTSQGHEAI) are Cytoplasmic-facing. Residues 431–457 (FYSFYVFFTKFASGVSLGVSTLALSFA) form a helical membrane-spanning segment. The Extracellular portion of the chain corresponds to 458 to 469 (GYETGVCVQSDS). The chain crosses the membrane as a helical span at residues 470–493 (VNLTLKLLVSAAPVSLIALGLLIF). At 494 to 532 (MTYPIDEERREYNNKQLQLLLRNEEEEDEMEVLKPDITA) the chain is on the cytoplasmic side.

This sequence belongs to the major facilitator superfamily. In terms of tissue distribution, expressed in the developing nervous system.

Its subcellular location is the cell membrane. The protein resides in the endoplasmic reticulum membrane. It catalyses the reaction a 1-acyl-sn-glycero-3-phosphocholine(in) + Na(+)(in) = a 1-acyl-sn-glycero-3-phosphocholine(out) + Na(+)(out). The enzyme catalyses 1-(4Z,7Z,10Z,13Z,16Z,19Z-docosahexaenoyl)-sn-glycero-3-phosphocholine(in) + Na(+)(in) = 1-(4Z,7Z,10Z,13Z,16Z,19Z-docosahexaenoyl)-sn-glycero-3-phosphocholine(out) + Na(+)(out). The catalysed reaction is 1-(9Z-octadecenoyl)-sn-glycero-3-phosphocholine(in) + Na(+)(in) = 1-(9Z-octadecenoyl)-sn-glycero-3-phosphocholine(out) + Na(+)(out). It carries out the reaction 1-hexadecanoyl-sn-glycero-3-phosphocholine(in) + Na(+)(in) = 1-hexadecanoyl-sn-glycero-3-phosphocholine(out) + Na(+)(out). It catalyses the reaction a 1-acyl-sn-glycero-3-phosphoethanolamine(in) + Na(+)(in) = a 1-acyl-sn-glycero-3-phosphoethanolamine(out) + Na(+)(out). In terms of biological role, sodium-dependent lysophosphatidylcholine (LPC) symporter, which plays an essential role for blood-brain barrier formation and function. Specifically expressed in endothelium of the blood-brain barrier of micro-vessels and transports LPC into the brain. Transport of LPC is essential because it constitutes the major mechanism by which docosahexaenoic acid (DHA), an omega-3 fatty acid that is essential for normal brain growth and cognitive function, enters the brain. Transports LPC carrying long-chain fatty acids such LPC oleate and LPC palmitate with a minimum acyl chain length of 14 carbons. Does not transport docosahexaenoic acid in unesterified fatty acid. This is Sodium-dependent lysophosphatidylcholine symporter 1-A (mfsd2aa) from Danio rerio (Zebrafish).